The primary structure comprises 386 residues: Patatin-10 (386 aa).

The N-terminal stretch at 1–23 (MATTKSFLILFFMILATTSSTCA) is a signal peptide. One can recognise a PNPLA domain in the interval 32–229 (LSIDGGGIKG…TVGDPALLSL (198 aa)). A GXGXXG motif is present at residues 36–41 (GGGIKG). Positions 75-79 (GTSTG) match the GXSXG motif. Ser77 acts as the Nucleophile in catalysis. Asn115 is a glycosylation site (N-linked (GlcNAc...) asparagine). The active-site Proton acceptor is the Asp215. Positions 215-217 (DGG) match the DGA/G motif. Residues 321-384 (ENALTGTTTE…NRKKLRANKA (64 aa)) are a coiled coil.

Belongs to the patatin family. In terms of tissue distribution, tuber.

It localises to the vacuole. Functionally, probable lipolytic acyl hydrolase (LAH), an activity which is thought to be involved in the response of tubers to pathogens. In Solanum tuberosum (Potato), this protein is Patatin-10.